The chain runs to 346 residues: MHAALEIKEAEFQTDQVVGLVENSFTLYSLGQNGGPLESCCSSHLISDGAFQEIISLDGGSHLSALVELIQSKHLSVDSWSSITKYDNYTVENESYAKAWHLSEQRIKTFLITHCHLDHIYGAVINSAMFGPQNPRTIVGLNYVIDTLKKHVFNNLLWPSLDKAGFINFQVVEPSMYTSLTTTLSILPFPVNHGSSFGQELKSSAFLFRNNLSDRYFLAFGDVEPDMVASEPLNIHIWRACSSLIAQRKLSHILIECSTPDIPDTLLFGHFCPRHLVNELCILQSLVQSYGVIMPTLTCLLTHLKSHPLQSANPADVILEQLESLSSKSSLSVTFKILQRGQFYKF.

It belongs to the cyclic nucleotide phosphodiesterase class-II family.

The catalysed reaction is a nucleoside 3',5'-cyclic phosphate + H2O = a nucleoside 5'-phosphate + H(+). This Schizosaccharomyces pombe (strain 972 / ATCC 24843) (Fission yeast) protein is 3',5'-cyclic-nucleotide phosphodiesterase (cgs2).